The chain runs to 161 residues: Protein-export protein SecB (161 aa).

This sequence belongs to the SecB family. As to quaternary structure, homotetramer, a dimer of dimers. One homotetramer interacts with 1 SecA dimer.

It is found in the cytoplasm. Its function is as follows. One of the proteins required for the normal export of preproteins out of the cell cytoplasm. It is a molecular chaperone that binds to a subset of precursor proteins, maintaining them in a translocation-competent state. It also specifically binds to its receptor SecA. The sequence is that of Protein-export protein SecB from Shewanella sp. (strain MR-7).